A 331-amino-acid chain; its full sequence is FMRFamide-related neuropeptides (331 aa).

A signal peptide spans 1 to 25; sequence MRCWSPCSLLVVIAIYCLSSHTSEA. A propeptide spanning residues 26-65 is cleaved from the precursor; the sequence is FDLAQACVESQRLSLLPICDTIFAVQQEGAQQSADDGLRS. 2 positions are modified to phenylalanine amide: phenylalanine 71 and phenylalanine 83. Positions 86–94 are excised as a propeptide; the sequence is NVPDLPFED. At phenylalanine 100 the chain carries Phenylalanine amide. Positions 103–168 are excised as a propeptide; sequence AAPQLDDLLK…YVDDVEDSDV (66 aa). Positions 122–153 are disordered; sequence QKSDDTSVRRKRSTDAAPQSNTDSAEQKNDSA. Phenylalanine amide occurs at positions 174 and 181. Positions 184-194 are excised as a propeptide; the sequence is NPSDVGSKLTE. Phenylalanine 200 bears the Phenylalanine amide mark. A propeptide spanning residues 203-205 is cleaved from the precursor; the sequence is DPE. Phenylalanine 211 carries the post-translational modification Phenylalanine amide. Positions 214–216 are excised as a propeptide; it reads SDD. Phenylalanine 222 is modified (phenylalanine amide). Residues 225–236 constitute a propeptide that is removed on maturation; that stretch reads NPGDAEDELEED. The residue at position 242 (phenylalanine 242) is a Phenylalanine amide. Positions 245–254 are excised as a propeptide; sequence GDEEDEEEAE. Phenylalanine 260 is modified (phenylalanine amide). Positions 263–265 are excised as a propeptide; that stretch reads DPE. Phenylalanine amide is present on phenylalanine 271. The propeptide occupies 274-277; the sequence is NGEE. Phenylalanine 283 carries the phenylalanine amide modification. A propeptide spanning residues 286–293 is cleaved from the precursor; that stretch reads NPEEPEAD. The residue at position 299 (phenylalanine 299) is a Phenylalanine amide. Residues 302–312 constitute a propeptide that is removed on maturation; it reads GGEEDDVNTEE. Phenylalanine 318 bears the Phenylalanine amide mark. A propeptide spanning residues 321–331 is cleaved from the precursor; the sequence is SAEKCKGCLEG.

This sequence belongs to the FARP (FMRFamide related peptide) family. As to expression, present ubiquitously in the brain and regions of the central nervous system as well as in the periphery and throughout the dermal chromatophore layer (at protein level).

The protein resides in the secreted. In terms of biological role, excitatory neurotransmitters that directly modulate chromatophore function by activating chromatophore expansion at the chromatophore neuromuscular junction. The chain is FMRFamide-related neuropeptides from Sepia officinalis (Common cuttlefish).